A 361-amino-acid chain; its full sequence is uncharacterized protein (361 aa).

Positions 1–19 (MNLVICVLLLSIWKNNCMT) are cleaved as a signal peptide. The Extracellular portion of the chain corresponds to 20–47 (TNQTNGSSTTGDKPVESMQTKLNYLRRN). Residue Asn24 is glycosylated (N-linked (GlcNAc...) asparagine). A helical transmembrane segment spans residues 48–68 (LLILVGIIIMVFVFICFCYLH). The Cytoplasmic segment spans residues 69–361 (YNCLSDDASK…QVTSEVTLND (293 aa)). The segment covering 99 to 113 (AKTASQCSPETQPML) has biased composition (polar residues). 3 disordered regions span residues 99–184 (AKTA…KAHK), 209–247 (PPQL…NPKR), and 295–316 (QNLH…LDSR). The span at 114–133 (STADKSSDSSSPERASAQSS) shows a compositional bias: low complexity. Over residues 141 to 150 (SSLQKPSIPN) the composition is skewed to polar residues. Over residues 299–308 (VSSKVKSSSR) the composition is skewed to low complexity.

The protein resides in the membrane. This is an uncharacterized protein from Homo sapiens (Human).